The chain runs to 325 residues: Ribosomal RNA small subunit methyltransferase H (325 aa).

S-adenosyl-L-methionine-binding positions include 41–43, Asp60, Tyr87, Asp108, and Gln115; that span reads GGH. A disordered region spans residues 295–325; sequence DDDEKAANPRAAPVRLRAAERTRASEDRRGS. The segment covering 311–325 has biased composition (basic and acidic residues); the sequence is RAAERTRASEDRRGS.

This sequence belongs to the methyltransferase superfamily. RsmH family.

The protein localises to the cytoplasm. The enzyme catalyses cytidine(1402) in 16S rRNA + S-adenosyl-L-methionine = N(4)-methylcytidine(1402) in 16S rRNA + S-adenosyl-L-homocysteine + H(+). Its function is as follows. Specifically methylates the N4 position of cytidine in position 1402 (C1402) of 16S rRNA. This chain is Ribosomal RNA small subunit methyltransferase H, found in Leifsonia xyli subsp. xyli (strain CTCB07).